The chain runs to 486 residues: tRNA sulfurtransferase (486 aa).

Positions 63–167 (DAFAERLGCI…HEKLYMVVRR (105 aa)) constitute a THUMP domain. ATP-binding positions include 185–186 (LI), K267, G289, and Q298. A disulfide bridge links C346 with C460. One can recognise a Rhodanese domain in the interval 408-486 (VDTQEVVIDI…GYTNVKVYRP (79 aa)). The active-site Cysteine persulfide intermediate is C460.

Belongs to the ThiI family.

The protein localises to the cytoplasm. The catalysed reaction is [ThiI sulfur-carrier protein]-S-sulfanyl-L-cysteine + a uridine in tRNA + 2 reduced [2Fe-2S]-[ferredoxin] + ATP + H(+) = [ThiI sulfur-carrier protein]-L-cysteine + a 4-thiouridine in tRNA + 2 oxidized [2Fe-2S]-[ferredoxin] + AMP + diphosphate. The enzyme catalyses [ThiS sulfur-carrier protein]-C-terminal Gly-Gly-AMP + S-sulfanyl-L-cysteinyl-[cysteine desulfurase] + AH2 = [ThiS sulfur-carrier protein]-C-terminal-Gly-aminoethanethioate + L-cysteinyl-[cysteine desulfurase] + A + AMP + 2 H(+). Its pathway is cofactor biosynthesis; thiamine diphosphate biosynthesis. Functionally, catalyzes the ATP-dependent transfer of a sulfur to tRNA to produce 4-thiouridine in position 8 of tRNAs, which functions as a near-UV photosensor. Also catalyzes the transfer of sulfur to the sulfur carrier protein ThiS, forming ThiS-thiocarboxylate. This is a step in the synthesis of thiazole, in the thiamine biosynthesis pathway. The sulfur is donated as persulfide by IscS. This chain is tRNA sulfurtransferase, found in Shewanella denitrificans (strain OS217 / ATCC BAA-1090 / DSM 15013).